The following is a 359-amino-acid chain: Type-1 angiotensin II receptor (359 aa).

Over M1–N25 the chain is Extracellular. An N-linked (GlcNAc...) asparagine glycan is attached at N4. Residues Q15 and D17 each coordinate angiotensin II. Disulfide bonds link C18–C274 and C101–C180. Residues Y26–F55 form a helical membrane-spanning segment. Residues Y56–T61 lie on the Cytoplasmic side of the membrane. Residues V62–A89 traverse the membrane as a helical segment. Residues M90–N98 lie on the Extracellular side of the membrane. The helical transmembrane segment at Y99–D125 threads the bilayer. Residues R126 to T141 lie on the Cytoplasmic side of the membrane. Residues M142–I165 form a helical membrane-spanning segment. The Extracellular segment spans residues H166–T190. R167 is a binding site for angiotensin II. N176 carries N-linked (GlcNAc...) asparagine glycosylation. Angiotensin II is bound by residues F182, H183, and Y184. N-linked (GlcNAc...) asparagine glycosylation is present at N188. A helical membrane pass occupies residues L191–T216. K199 contributes to the angiotensin II binding site. Residues L217–F239 are Cytoplasmic-facing. The chain crosses the membrane as a helical span at residues K240–L268. Topologically, residues G269–D278 are extracellular. A helical transmembrane segment spans residues I279–F304. The Cytoplasmic segment spans residues L305–E359. Residues S335 to K350 are compositionally biased toward polar residues. A disordered region spans residues S335 to E359. The S-palmitoyl cysteine moiety is linked to residue C355.

The protein belongs to the G-protein coupled receptor 1 family. As to quaternary structure, interacts with MAS1. Interacts with ARRB1. Interacts with FLNA (via filamin repeat 21); increases PKA-mediated phosphorylation of FLNA. In terms of processing, C-terminal Ser or Thr residues may be phosphorylated.

It localises to the cell membrane. Functionally, receptor for angiotensin II, a vasoconstricting peptide, which acts as a key regulator of blood pressure and sodium retention by the kidney. The activated receptor in turn couples to G-alpha proteins G(q) (GNAQ, GNA11, GNA14 or GNA15) and thus activates phospholipase C and increases the cytosolic Ca(2+) concentrations, which in turn triggers cellular responses such as stimulation of protein kinase C. This chain is Type-1 angiotensin II receptor (AGTR1), found in Ovis aries (Sheep).